The chain runs to 393 residues: 4-hydroxyphenylpyruvate dioxygenase (393 aa).

Threonine 2 bears the N-acetylthreonine mark. 2 VOC domains span residues 18 to 149 (HFHS…LVEK) and 180 to 338 (MIDH…IFTK). An N6-succinyllysine modification is found at lysine 132. Fe cation is bound at residue histidine 183. 3 positions are modified to phosphoserine: serine 211, serine 226, and serine 250. Fe cation-binding residues include histidine 266 and glutamate 349.

Belongs to the 4HPPD family. As to quaternary structure, homodimer. Fe cation serves as cofactor.

The protein localises to the cytoplasm. The protein resides in the endoplasmic reticulum membrane. Its subcellular location is the golgi apparatus membrane. The catalysed reaction is 3-(4-hydroxyphenyl)pyruvate + O2 = homogentisate + CO2. It functions in the pathway amino-acid degradation; L-phenylalanine degradation; acetoacetate and fumarate from L-phenylalanine: step 3/6. Its function is as follows. Catalyzes the conversion of 4-hydroxyphenylpyruvic acid to homogentisic acid, one of the steps in tyrosine catabolism. The chain is 4-hydroxyphenylpyruvate dioxygenase (HPD) from Homo sapiens (Human).